The chain runs to 227 residues: 7-cyano-7-deazaguanine synthase (227 aa).

F8–L18 contacts ATP. 4 residues coordinate Zn(2+): C187, C196, C199, and C202.

It belongs to the QueC family. Zn(2+) is required as a cofactor.

The enzyme catalyses 7-carboxy-7-deazaguanine + NH4(+) + ATP = 7-cyano-7-deazaguanine + ADP + phosphate + H2O + H(+). It functions in the pathway purine metabolism; 7-cyano-7-deazaguanine biosynthesis. Functionally, catalyzes the ATP-dependent conversion of 7-carboxy-7-deazaguanine (CDG) to 7-cyano-7-deazaguanine (preQ(0)). The protein is 7-cyano-7-deazaguanine synthase of Shewanella pealeana (strain ATCC 700345 / ANG-SQ1).